The sequence spans 434 residues: Trehalose-phosphatase (434 aa).

Mg(2+)-binding residues include Asp-156 and Asp-158. Asp-158 acts as the Proton donor/acceptor in catalysis. 275–277 (QKK) serves as a coordination point for substrate. Asp-366 is a binding site for Mg(2+).

It belongs to the gob-1 trehalose phosphatase family. It depends on Mg(2+) as a cofactor.

It carries out the reaction alpha,alpha-trehalose 6-phosphate + H2O = alpha,alpha-trehalose + phosphate. Functionally, catalyzes the hydrolysis of trehalose 6-phosphate to trehalose and phosphate; prevents the accumulation of toxic levels of trehalose 6-phosphate. This is Trehalose-phosphatase (gob-1) from Caenorhabditis briggsae.